The following is a 155-amino-acid chain: 6,7-dimethyl-8-ribityllumazine synthase (155 aa).

Residues Phe-23, 57 to 59, and 80 to 82 contribute to the 5-amino-6-(D-ribitylamino)uracil site; these read AFE and AVI. Position 85–86 (85–86) interacts with (2S)-2-hydroxy-3-oxobutyl phosphate; sequence AT. The active-site Proton donor is His-88. Tyr-113 is a 5-amino-6-(D-ribitylamino)uracil binding site. Arg-127 contributes to the (2S)-2-hydroxy-3-oxobutyl phosphate binding site.

Belongs to the DMRL synthase family.

The catalysed reaction is (2S)-2-hydroxy-3-oxobutyl phosphate + 5-amino-6-(D-ribitylamino)uracil = 6,7-dimethyl-8-(1-D-ribityl)lumazine + phosphate + 2 H2O + H(+). It participates in cofactor biosynthesis; riboflavin biosynthesis; riboflavin from 2-hydroxy-3-oxobutyl phosphate and 5-amino-6-(D-ribitylamino)uracil: step 1/2. Its function is as follows. Catalyzes the formation of 6,7-dimethyl-8-ribityllumazine by condensation of 5-amino-6-(D-ribitylamino)uracil with 3,4-dihydroxy-2-butanone 4-phosphate. This is the penultimate step in the biosynthesis of riboflavin. In Moorella thermoacetica (strain ATCC 39073 / JCM 9320), this protein is 6,7-dimethyl-8-ribityllumazine synthase.